Reading from the N-terminus, the 159-residue chain is Putative transmembrane protein ORF159 (159 aa).

Helical transmembrane passes span 20 to 40 (LLLS…LSLF) and 59 to 79 (IIAV…GFCC). The short motif at 106–108 (RGD) is the Cell attachment site element.

The protein resides in the host membrane. In Acidianus sp. F28 (AFV-2), this protein is Putative transmembrane protein ORF159.